The primary structure comprises 468 residues: MSSGKITQVIGPVVDVAFAAGDRLPEINNALVVYKNDEKKSKIVLEVALELGDGVVRTIAMESTDGLTRGLEVLDTGRPISVPVGKETLGRVFNVLGDTIDLDAPFGDDAERQPIHKKAPTFDELSTSSEILETGIKVIDLLAPYLKGGKVGLFGGAGVGKTVLIQELIHNIAQEHGGISVFTGVGERTREGNDLYWEMKESGVIEKTAMVFGQMNEPPGARMRVALTGLTIAEYFRDVEGQDVLLFIDNIFRFTQAGSEVSALLGRMPSAVGYQPTLATEMGQLQERITSTKKGSVTSIQAIYVPADDYTDPAPATAFAHLDSTTNLERKLVQLGIYPAVDPLASSSRALAPEIVGEEHYAVAAEVKRVLQRYHELQDIIAILGMDELSDEEKTLVARARRIQFFLSQNFNVAEQFTGQPGSYVPVAETVRGFKEILEGKHDKLPEDAFRGVGSIEDVLAKAEKMGF.

Gly-155–Thr-162 contacts ATP.

This sequence belongs to the ATPase alpha/beta chains family. In terms of assembly, F-type ATPases have 2 components, CF(1) - the catalytic core - and CF(0) - the membrane proton channel. CF(1) has five subunits: alpha(3), beta(3), gamma(1), delta(1), epsilon(1). CF(0) has three main subunits: a(1), b(2) and c(9-12). The alpha and beta chains form an alternating ring which encloses part of the gamma chain. CF(1) is attached to CF(0) by a central stalk formed by the gamma and epsilon chains, while a peripheral stalk is formed by the delta and b chains.

Its subcellular location is the cell membrane. The catalysed reaction is ATP + H2O + 4 H(+)(in) = ADP + phosphate + 5 H(+)(out). Functionally, produces ATP from ADP in the presence of a proton gradient across the membrane. The catalytic sites are hosted primarily by the beta subunits. The chain is ATP synthase subunit beta from Streptococcus gordonii (strain Challis / ATCC 35105 / BCRC 15272 / CH1 / DL1 / V288).